Here is a 224-residue protein sequence, read N- to C-terminus: Peroxiredoxin-6 (224 aa).

The 165-residue stretch at 4 to 168 (LLLGDEAPNF…ILRVVDSLQL (165 aa)) folds into the Thioredoxin domain. The interval 30–39 (DSWGILFSHP) is required and sufficient for targeting to lysosomes and lamellar bodies. Catalysis depends on C46, which acts as the Cysteine sulfenic acid (-SOH) intermediate; for peroxidase activity. Y88 bears the Phosphotyrosine mark. Catalysis depends on D139, which acts as the For phospholipase activity. T176 is modified (phosphothreonine; by MAPK).

The protein belongs to the peroxiredoxin family. Prx6 subfamily. As to quaternary structure, homodimer. Interacts with GSTP1; mediates PRDX6 glutathionylation and regeneration. Post-translationally, irreversibly inactivated by overoxidation of Cys-46 to sulfinic acid (Cys-SO(2)H) and sulfonic acid (Cys-SO(3)H) forms upon oxidative stress. Phosphorylation at Thr-176 by MAP kinases increases the phospholipase activity of the enzyme. The phosphorylated form exhibits a greater lysophosphatidylcholine acyltransferase activity compared to the non-phosphorylated form.

The protein resides in the cytoplasm. The protein localises to the lysosome. It carries out the reaction a hydroperoxide + 2 glutathione = an alcohol + glutathione disulfide + H2O. It catalyses the reaction a 1,2-diacyl-sn-glycero-3-phosphocholine + H2O = a 1-acyl-sn-glycero-3-phosphocholine + a fatty acid + H(+). The catalysed reaction is a 1-acyl-sn-glycero-3-phosphocholine + an acyl-CoA = a 1,2-diacyl-sn-glycero-3-phosphocholine + CoA. The enzyme catalyses 1-hexadecanoyl-sn-glycero-3-phosphocholine + hexadecanoyl-CoA = 1,2-dihexadecanoyl-sn-glycero-3-phosphocholine + CoA. It carries out the reaction 1,2-dihexadecanoyl-sn-glycero-3-phosphocholine + H2O = 1-hexadecanoyl-sn-glycero-3-phosphocholine + hexadecanoate + H(+). Its function is as follows. Thiol-specific peroxidase that catalyzes the reduction of hydrogen peroxide and organic hydroperoxides to water and alcohols, respectively. Can reduce H(2)O(2) and short chain organic, fatty acid, and phospholipid hydroperoxides. Also has phospholipase activity, and can therefore either reduce the oxidized sn-2 fatty acyl group of phospholipids (peroxidase activity) or hydrolyze the sn-2 ester bond of phospholipids (phospholipase activity). These activities are dependent on binding to phospholipids at acidic pH and to oxidized phospholipds at cytosolic pH. Plays a role in cell protection against oxidative stress by detoxifying peroxides and in phospholipid homeostasis. Exhibits acyl-CoA-dependent lysophospholipid acyltransferase which mediates the conversion of lysophosphatidylcholine (1-acyl-sn-glycero-3-phosphocholine or LPC) into phosphatidylcholine (1,2-diacyl-sn-glycero-3-phosphocholine or PC). Shows a clear preference for LPC as the lysophospholipid and for palmitoyl CoA as the fatty acyl substrate. This Gallus gallus (Chicken) protein is Peroxiredoxin-6 (PRDX6).